We begin with the raw amino-acid sequence, 453 residues long: Ribosome biogenesis protein SSF1 (453 aa).

Basic residues predominate over residues 1–11 (MAKRRQKKRTH). 3 disordered regions span residues 1 to 22 (MAKR…EQGI), 275 to 324 (KAKH…PRKK), and 374 to 453 (KMRL…SEVE). One can recognise a Brix domain in the interval 26-348 (MVIRVGQTSL…LVKIEEGICS (323 aa)). The segment covering 288–300 (PVEKKDNKEREKE) has biased composition (basic and acidic residues). T301 carries the phosphothreonine modification. Residues 374–398 (KMRLKEQRKKEQEENIAKKKAVKDA) show a composition bias toward basic and acidic residues. Residues 399-409 (KKQRKLERRKA) are compositionally biased toward basic residues. Residues 410-423 (RAAEGGEGQGKDDA) are compositionally biased toward basic and acidic residues. Residues 442–453 (EDLDSDLFSEVE) show a composition bias toward acidic residues.

In terms of assembly, part of a complex that includes BRX1, RPF1, RPF2 and SSF1 or SSF2.

The protein localises to the nucleus. Its subcellular location is the nucleolus. Required for biogenesis of the 60S ribosomal subunit. The sequence is that of Ribosome biogenesis protein SSF1 (SSF1) from Saccharomyces cerevisiae (strain ATCC 204508 / S288c) (Baker's yeast).